The following is a 48-amino-acid chain: Palustrin-3b (48 aa).

A disulfide bridge links Cys43 with Cys48.

In terms of tissue distribution, expressed by the skin glands.

It is found in the secreted. In terms of biological role, antimicrobial activity against Gram-negative bacterium E.coli. The protein is Palustrin-3b of Lithobates palustris (Pickerel frog).